The chain runs to 206 residues: Cytochrome c biogenesis ATP-binding export protein CcmA (206 aa).

One can recognise an ABC transporter domain in the interval 2–206; sequence LEARDVVCIR…IQLTPSEGTP (205 aa). 34 to 41 contacts ATP; it reads GANGVGKT.

Belongs to the ABC transporter superfamily. CcmA exporter (TC 3.A.1.107) family. In terms of assembly, the complex is composed of two ATP-binding proteins (CcmA) and two transmembrane proteins (CcmB).

The protein resides in the cell inner membrane. The enzyme catalyses heme b(in) + ATP + H2O = heme b(out) + ADP + phosphate + H(+). Its function is as follows. Part of the ABC transporter complex CcmAB involved in the biogenesis of c-type cytochromes; once thought to export heme, this seems not to be the case, but its exact role is uncertain. Responsible for energy coupling to the transport system. The chain is Cytochrome c biogenesis ATP-binding export protein CcmA from Pectobacterium atrosepticum (strain SCRI 1043 / ATCC BAA-672) (Erwinia carotovora subsp. atroseptica).